Consider the following 263-residue polypeptide: Metaxin-2 (263 aa).

At Ser-2 the chain carries N-acetylserine.

Belongs to the metaxin family. As to quaternary structure, interacts with MTX1/metaxin-1. Associates with the mitochondrial contact site and cristae organizing system (MICOS) complex, composed of at least MICOS10/MIC10, CHCHD3/MIC19, CHCHD6/MIC25, APOOL/MIC27, IMMT/MIC60, APOO/MIC23/MIC26 and QIL1/MIC13. This complex was also known under the names MINOS or MitOS complex. The MICOS complex associates with mitochondrial outer membrane proteins SAMM50, MTX1 and MTX2 (together described as components of the mitochondrial outer membrane sorting assembly machinery (SAM) complex) and DNAJC11, mitochondrial inner membrane protein TMEM11 and with HSPA9. The MICOS and SAM complexes together with DNAJC11 are part of a large protein complex spanning both membranes termed the mitochondrial intermembrane space bridging (MIB) complex.

The protein localises to the mitochondrion outer membrane. It is found in the mitochondrion. Functionally, involved in transport of proteins into the mitochondrion. This Homo sapiens (Human) protein is Metaxin-2 (MTX2).